The following is a 285-amino-acid chain: ATP synthase gamma chain (285 aa).

The protein belongs to the ATPase gamma chain family. F-type ATPases have 2 components, CF(1) - the catalytic core - and CF(0) - the membrane proton channel. CF(1) has five subunits: alpha(3), beta(3), gamma(1), delta(1), epsilon(1). CF(0) has three main subunits: a, b and c.

It is found in the cell membrane. Its function is as follows. Produces ATP from ADP in the presence of a proton gradient across the membrane. The gamma chain is believed to be important in regulating ATPase activity and the flow of protons through the CF(0) complex. In Halalkalibacterium halodurans (strain ATCC BAA-125 / DSM 18197 / FERM 7344 / JCM 9153 / C-125) (Bacillus halodurans), this protein is ATP synthase gamma chain.